A 289-amino-acid chain; its full sequence is Shikimate dehydrogenase (NADP(+)) (289 aa).

Shikimate is bound by residues 19-21 (SLS) and Thr66. Lys70 (proton acceptor) is an active-site residue. 2 residues coordinate shikimate: Asn91 and Asp106. Residues 131–135 (GNGGA) and Leu229 each bind NADP(+). Tyr231 contacts shikimate. Gly252 is a binding site for NADP(+).

Belongs to the shikimate dehydrogenase family. In terms of assembly, homodimer.

The enzyme catalyses shikimate + NADP(+) = 3-dehydroshikimate + NADPH + H(+). Its pathway is metabolic intermediate biosynthesis; chorismate biosynthesis; chorismate from D-erythrose 4-phosphate and phosphoenolpyruvate: step 4/7. Its function is as follows. Involved in the biosynthesis of the chorismate, which leads to the biosynthesis of aromatic amino acids. Catalyzes the reversible NADPH linked reduction of 3-dehydroshikimate (DHSA) to yield shikimate (SA). The sequence is that of Shikimate dehydrogenase (NADP(+)) from Nostoc sp. (strain PCC 7120 / SAG 25.82 / UTEX 2576).